A 361-amino-acid polypeptide reads, in one-letter code: Protein RecA (361 aa).

ATP is bound at residue 77–84; sequence GPESSGKT.

Belongs to the RecA family.

The protein localises to the cytoplasm. Can catalyze the hydrolysis of ATP in the presence of single-stranded DNA, the ATP-dependent uptake of single-stranded DNA by duplex DNA, and the ATP-dependent hybridization of homologous single-stranded DNAs. It interacts with LexA causing its activation and leading to its autocatalytic cleavage. The polypeptide is Protein RecA (Sinorhizobium medicae (strain WSM419) (Ensifer medicae)).